The chain runs to 297 residues: Tyrosine recombinase XerD (297 aa).

Positions 1-87 (MLEYAIEDFF…SIRSFHQFLI (87 aa)) constitute a Core-binding (CB) domain. Residues 108-291 (KLPDILSQDE…TKARLKDMYQ (184 aa)) form the Tyr recombinase domain. Active-site residues include R147, K171, H243, R246, and H269. Y278 functions as the O-(3'-phospho-DNA)-tyrosine intermediate in the catalytic mechanism.

It belongs to the 'phage' integrase family. XerD subfamily. In terms of assembly, forms a cyclic heterotetrameric complex composed of two molecules of XerC and two molecules of XerD.

The protein localises to the cytoplasm. Its function is as follows. Site-specific tyrosine recombinase, which acts by catalyzing the cutting and rejoining of the recombining DNA molecules. The XerC-XerD complex is essential to convert dimers of the bacterial chromosome into monomers to permit their segregation at cell division. It also contributes to the segregational stability of plasmids. The sequence is that of Tyrosine recombinase XerD from Oceanobacillus iheyensis (strain DSM 14371 / CIP 107618 / JCM 11309 / KCTC 3954 / HTE831).